Here is a 483-residue protein sequence, read N- to C-terminus: Coagulation factor X isoform 1 (483 aa).

The N-terminal stretch at 1 to 20 (MAPQLLLCLILTFLWSLPEA) is a signal peptide. Residues 21–40 (ESNVFLKSKVANRFLQRTKR) constitute a propeptide that is removed on maturation. Residues 41–86 (ANSLFEEFKSGNIERECIEERCSKEEAREAFEDDEKTETFWNVYVD) enclose the Gla domain. A 4-carboxyglutamate mark is found at E46, E47, E54, E56, E59, E60, E65, E66, E69, E72, and E75. A disulfide bridge links C57 with C62. The EGF-like 1; calcium-binding domain maps to 86 to 122 (DGDQCSSNPCHYGGTCKDGIGSYTCTCLSGYEGKNCE). Cystine bridges form between C90–C101, C95–C110, C112–C121, C129–C140, C136–C149, C151–C164, C172–C345, C245–C250, C265–C281, C393–C407, and C418–C446. An O-linked (Hex...) serine glycan is attached at S92. Residue D103 is modified to (3R)-3-hydroxyaspartate. One can recognise an EGF-like 2 domain in the interval 125-165 (LYKSCRVDNGDCWHFCKPVQNGIQCSCAESYLLGEDGHSCV). Positions 183–238 (EANLPDFQTDFSDDYDEIDENNFVETPTNFSGLVLTVQSQNATLLKKSDNPSPDIR) are cleaved as a propeptide — activation peptide. One can recognise a Peptidase S1 domain in the interval 239–470 (VVNGTDCKLG…FILWIKRIIR (232 aa)). The active-site Charge relay system is the H280. N-linked (GlcNAc...) asparagine glycosylation occurs at N283. D325 functions as the Charge relay system in the catalytic mechanism. Residue S422 is the Charge relay system of the active site.

It belongs to the peptidase S1 family. In terms of assembly, heterodimer of a light chain and a heavy chain; disulfide-linked. In terms of processing, gamma-carboxyglutamate residues are formed by vitamin K dependent carboxylation. These residues are essential for the binding of calcium. The activation peptide is cleaved by factor IXa (in the intrinsic pathway), or by factor VIIa (in the extrinsic pathway). Post-translationally, the iron and 2-oxoglutarate dependent 3-hydroxylation of aspartate and asparagine is (R) stereospecific within EGF domains. Plasma; synthesized in the liver.

It is found in the secreted. The enzyme catalyses Selective cleavage of Arg-|-Thr and then Arg-|-Ile bonds in prothrombin to form thrombin.. Its function is as follows. Factor Xa is a vitamin K-dependent glycoprotein that converts prothrombin to thrombin in the presence of factor Va, calcium and phospholipid during blood clotting. The protein is Coagulation factor X isoform 1 (F10) of Pseudonaja textilis (Eastern brown snake).